The chain runs to 392 residues: Bifunctional enzyme Fae/Hps (392 aa).

The segment at methionine 1 to isoleucine 161 is formaldehyde-activating enzyme. The Proton donor role is filled by histidine 17. Residues aspartate 19, leucine 48, lysine 66, threonine 68, and glutamine 83 each coordinate substrate. Positions methionine 162–phenylalanine 392 are 3-hexulose-6-phosphate synthase.

The protein in the N-terminal section; belongs to the formaldehyde-activating enzyme family. In the C-terminal section; belongs to the HPS/KGPDC family. HPS subfamily.

The catalysed reaction is 5,6,7,8-tetrahydromethanopterin + formaldehyde = 5,10-methylenetetrahydromethanopterin + H2O. It carries out the reaction D-ribulose 5-phosphate + formaldehyde = D-arabino-hex-3-ulose 6-phosphate. Its pathway is carbohydrate biosynthesis; D-ribose 5-phosphate biosynthesis. Its function is as follows. Catalyzes the condensation of formaldehyde with tetrahydromethanopterin (H(4)MPT) to 5,10-methylenetetrahydromethanopterin. In terms of biological role, catalyzes the reversible formation of ribulose-5-phosphate and formaldehyde from 3-hexulose-6-phosphate. This chain is Bifunctional enzyme Fae/Hps, found in Methanosarcina barkeri (strain Fusaro / DSM 804).